Reading from the N-terminus, the 384-residue chain is Dual specificity protein phosphatase 5 (384 aa).

The region spanning 19–141 is the Rhodanese domain; the sequence is AEARCVVLDC…FYSQYPECCV (123 aa). The Nuclear localization signal motif lies at 53 to 74; it reads RRARGGAVSARYVLADEAARAR. Residues 178–319 form the Tyrosine-protein phosphatase domain; that stretch reads GPVEILPFLY…LLQYESEILP (142 aa). Residue C263 is the Phosphocysteine intermediate of the active site.

Belongs to the protein-tyrosine phosphatase family. Non-receptor class dual specificity subfamily.

It is found in the nucleus. It catalyses the reaction O-phospho-L-tyrosyl-[protein] + H2O = L-tyrosyl-[protein] + phosphate. The catalysed reaction is O-phospho-L-seryl-[protein] + H2O = L-seryl-[protein] + phosphate. The enzyme catalyses O-phospho-L-threonyl-[protein] + H2O = L-threonyl-[protein] + phosphate. Functionally, dual specificity protein phosphatase; active with phosphotyrosine, phosphoserine and phosphothreonine residues. The highest relative activity is toward ERK1. The sequence is that of Dual specificity protein phosphatase 5 (Dusp5) from Rattus norvegicus (Rat).